A 362-amino-acid polypeptide reads, in one-letter code: 3-dehydroquinate synthase (362 aa).

It belongs to the archaeal-type DHQ synthase family.

It catalyses the reaction 2-amino-2,3,7-trideoxy-D-lyxo-hept-6-ulosonate + NAD(+) + H2O = 3-dehydroquinate + NH4(+) + NADH + H(+). In terms of biological role, catalyzes the oxidative deamination and cyclization of 2-amino-3,7-dideoxy-D-threo-hept-6-ulosonic acid (ADH) to yield 3-dehydroquinate (DHQ), which is fed into the canonical shikimic pathway of aromatic amino acid biosynthesis. The protein is 3-dehydroquinate synthase of Methanococcus aeolicus (strain ATCC BAA-1280 / DSM 17508 / OCM 812 / Nankai-3).